The primary structure comprises 121 residues: Large ribosomal subunit protein eL18 (121 aa).

This sequence belongs to the eukaryotic ribosomal protein eL18 family.

The protein is Large ribosomal subunit protein eL18 of Methanoregula boonei (strain DSM 21154 / JCM 14090 / 6A8).